Consider the following 120-residue polypeptide: Basic phospholipase A2 Cc2-PLA2 (120 aa).

Disulfide bonds link cysteine 26-cysteine 113, cysteine 28-cysteine 44, cysteine 43-cysteine 95, cysteine 49-cysteine 120, cysteine 50-cysteine 88, cysteine 57-cysteine 81, and cysteine 75-cysteine 86. Ca(2+)-binding residues include tyrosine 27, glycine 29, and glycine 31. The active site involves histidine 47. Residue aspartate 48 participates in Ca(2+) binding. The active site involves aspartate 89.

Belongs to the phospholipase A2 family. Group II subfamily. D49 sub-subfamily. As to quaternary structure, monomer. Ca(2+) is required as a cofactor. Expressed by the venom gland.

The protein localises to the secreted. The catalysed reaction is a 1,2-diacyl-sn-glycero-3-phosphocholine + H2O = a 1-acyl-sn-glycero-3-phosphocholine + a fatty acid + H(+). Functionally, basic phospholipase A2 that inhibits ADP-, thrombin- and arachidonic acid-induced platelet aggregation. It also exhibits anticoagulant effects upon human plasma in vitro. It induces a high hemolytic activity reaching its maximum after 24 hours. It induces a marked elevation of plasmatic levels of interleukin-6 and -10, eosinophil peroxidase and complement lytic activities and it also provokes a drastic increase of lymphocytes, monocytes and neutrophils in peripheral blood accompanied by a rapid intense migration of neutrophils to the peritoneal cavity. PLA2 catalyzes the calcium-dependent hydrolysis of the 2-acyl groups in 3-sn-phosphoglycerides. The protein is Basic phospholipase A2 Cc2-PLA2 of Cerastes cerastes (Horned desert viper).